The following is an 88-amino-acid chain: Small ribosomal subunit protein uS15 (88 aa).

The protein belongs to the universal ribosomal protein uS15 family. As to quaternary structure, part of the 30S ribosomal subunit. Forms a bridge to the 50S subunit in the 70S ribosome, contacting the 23S rRNA.

Functionally, one of the primary rRNA binding proteins, it binds directly to 16S rRNA where it helps nucleate assembly of the platform of the 30S subunit by binding and bridging several RNA helices of the 16S rRNA. Its function is as follows. Forms an intersubunit bridge (bridge B4) with the 23S rRNA of the 50S subunit in the ribosome. The protein is Small ribosomal subunit protein uS15 of Mesomycoplasma flocculare (Mycoplasma flocculare).